The primary structure comprises 246 residues: Polyhedrin (246 aa).

It belongs to the polyhedrin family.

Major component of the virus occlusion bodies, which are large proteinaceous structures (polyhedra), that protect the virus from the outside environment for extended periods until they are ingested by insect larvae. In Heliothis zea nuclear polyhedrosis virus (HzSNPV), this protein is Polyhedrin (PH).